Reading from the N-terminus, the 335-residue chain is CTD kinase subunit beta (335 aa).

Cyclin N-terminal domains follow at residues 26-151 (ILST…CFDF) and 158-241 (NYMV…LYMH). Residues 269 to 293 (KNSGRPQKPPQIDPHSSSLADEYRE) form a disordered region.

Belongs to the cyclin family. In terms of assembly, CTDK-I consists of three subunits, ctk1/lsk1, ctk2/lsc1 and ctk3 (also called alpha, beta and gamma). Interacts with ctk1/lsk1. This interaction is dependent on ctk1/lsk1 kinase activity.

The protein localises to the cytoplasm. It localises to the nucleus. Its function is as follows. Cyclin subunit of the CTDK-I complex, which hyperphosphorylates the C-terminal heptapeptide repeat domain (CTD) of the largest RNA polymerase II subunit. As part of the CTDK-I complex, involved in RNA polymerase II transcriptional elongation and pre-mRNA 3'-end processing. Together with ctk3, required for ctk1/lsk1 CTD kinase activation. Together with ctk1/lsk1, required for the regulation of cytokinesis by phosphorylating 'Ser-2' residues found in the heptad repeats of the CTD. This Schizosaccharomyces pombe (strain 972 / ATCC 24843) (Fission yeast) protein is CTD kinase subunit beta (lsc1).